A 553-amino-acid polypeptide reads, in one-letter code: MNIIDQVKQTLVEEIAASINKAGLADEIPDIKIEVPKDTKNGDYATNIAMVLTKIAKRNPREIAQAIVDNLDTEKAHVKQIDIAGPGFINFYLDNQYLTAIIPEAIEKGDQFGHVNESKGQNVLLEYVSANPTGDLHIGHARNAAVGDALANILTAAGYNVTREYYINDAGNQITNLARSIETHFFEALGDNSYSMPEDGYNGKDIIEIGKDLAEKHPEIKDYSEEARLKEFRKLGVEYEMAKLKNDLAEFNTHFDNWFSETSLYEKGEILEVLAKMKELGYTYEADGATWLRTTDFKDDKDRVLIKNDGTYTYFLPDIAYHFDKVKRGNDILIDLFGADHHGYINRLKASLETFGVDSNRLEIQIMQMVRLMENGKEVKMSKRTGNAITLREIMDEVGVDAARYFLTMRSPDSHFDFDMELAKEQSQDNPVYYAQYAHARICSILKQAKEQGIEVTAANDFTTITNEKAIELLKKVADFEPTIESAAEHRSAHRITNYIQDLAAHFHKFYNAEKVLTDDIEKTKAHVAMIEAVRITLKNALAMVGVSAPESM.

The 'HIGH' region motif lies at Pro132 to His140.

It belongs to the class-I aminoacyl-tRNA synthetase family. As to quaternary structure, monomer.

It localises to the cytoplasm. It catalyses the reaction tRNA(Arg) + L-arginine + ATP = L-arginyl-tRNA(Arg) + AMP + diphosphate. The chain is Arginine--tRNA ligase from Staphylococcus aureus (strain Mu50 / ATCC 700699).